The sequence spans 348 residues: Major outer membrane protein P.IB (348 aa).

The first 19 residues, 1–19 (MKKSLIALTLAALPVAAMA), serve as a signal peptide directing secretion.

It belongs to the Gram-negative porin family. As to quaternary structure, homotrimer.

It is found in the cell outer membrane. Its function is as follows. Serves as a slightly cation selective porin. Major antigen on the gonococcal cell surface and it may have pathogenic properties in addition to its porin activity. This is Major outer membrane protein P.IB (porB) from Neisseria gonorrhoeae.